The primary structure comprises 718 residues: Protein Hook homolog 3 (718 aa).

Methionine 1 is subject to N-acetylmethionine. A sufficient for interaction with microtubules region spans residues 1 to 164 (MFNVESVERV…QELMSKESPV (164 aa)). Serine 6 is subject to Phosphoserine. In terms of domain architecture, Calponin-homology (CH) spans 10 to 126 (VELCESLLTW…RMLQLILGCA (117 aa)). Coiled coils occupy residues 168–433 (HDAY…VQAQ) and 462–663 (EIRE…MEEK). A Phosphoserine modification is found at serine 238. The sufficient for interaction with IIGP1 stretch occupies residues 450-671 (SSDSLAAEIV…EKYIVSAWYN (222 aa)). The segment at 553–718 (EKLHEANNEL…PGHVQPATAR (166 aa)) is required for association with Golgi. Positions 682-718 (EDRLASTGSGQSFLARQRQATSTRRSYPGHVQPATAR) are disordered. The span at 687 to 706 (STGSGQSFLARQRQATSTRR) shows a compositional bias: polar residues. Residues serine 693 and serine 707 each carry the phosphoserine modification.

This sequence belongs to the hook family. As to quaternary structure, self-associates. Component of the FTS/Hook/FHIP complex (FHF complex), composed of AKTIP/FTS, FHIP1B, and one or more members of the Hook family of proteins HOOK1, HOOK2, and HOOK3. May interact directly with AKTIP/FTS, HOOK1 and HOOK2. Associates with several subunits of the homotypic vesicular sorting complex (the HOPS complex) including VPS16 and VPS41; these interactions may be indirect. Interacts with IIGP1. Interacts with MSR1, and this association is stimulated by ligand binding to MSR1. Interacts with microtubules. Part of a tripartite complex with dynein and dynactin, acts an adapter linking the dynein motor complex and dynactin. Interacts with dynein intermediate chain and dynactin (DCTN1). Interacts with CCDC181. Interacts with LRGUK. In terms of assembly, (Microbial infection) Interacts with Salmonella typhimurium spiC. Expressed in brain, cerebellum, heart, intestine, kidney, liver, lung, skeletal muscle, spleen and stomach (at protein level).

It localises to the cytoplasm. Its subcellular location is the cytoskeleton. The protein resides in the golgi apparatus. Acts as an adapter protein linking the dynein motor complex to various cargos and converts dynein from a non-processive to a highly processive motor in the presence of dynactin. Facilitates the interaction between dynein and dynactin and activates dynein processivity (the ability to move along a microtubule for a long distance without falling off the track). Predominantly recruits 2 dyneins, which increases both the force and speed of the microtubule motor. Component of the FTS/Hook/FHIP complex (FHF complex). The FHF complex may function to promote vesicle trafficking and/or fusion via the homotypic vesicular protein sorting complex (the HOPS complex). May regulate clearance of endocytosed receptors such as MSR1. Participates in defining the architecture and localization of the Golgi complex. FHF complex promotes the distribution of AP-4 complex to the perinuclear area of the cell. Its function is as follows. (Microbial infection) Serves as a target for the spiC protein from Salmonella typhimurium, which inactivates it, leading to a strong alteration in cellular trafficking. The chain is Protein Hook homolog 3 (Hook3) from Mus musculus (Mouse).